We begin with the raw amino-acid sequence, 132 residues long: Small ribosomal subunit protein uS8 (132 aa).

Belongs to the universal ribosomal protein uS8 family. As to quaternary structure, part of the 30S ribosomal subunit. Contacts proteins S5 and S12.

One of the primary rRNA binding proteins, it binds directly to 16S rRNA central domain where it helps coordinate assembly of the platform of the 30S subunit. The polypeptide is Small ribosomal subunit protein uS8 (Francisella tularensis subsp. holarctica (strain FTNF002-00 / FTA)).